We begin with the raw amino-acid sequence, 29 residues long: Beta-hexatoxin-Mr1a (29 aa).

Intrachain disulfides connect Cys-2-Cys-16, Cys-9-Cys-21, and Cys-15-Cys-26.

Belongs to the neurotoxin 15 family. 01 (magi-5) subfamily. As to expression, expressed by the venom gland.

Its subcellular location is the secreted. Its function is as follows. Insect and vertebrate active toxin. Binds at site 4 of mammalian voltage-gated sodium channels and shifts the activation voltage of the mammalian rNav1.2a (SCN2A) channel to more hyperpolarized voltages, whereas the insect channel, DmNav1 (para), is not affected. Causes temporary paralysis when injected into lepidopteran larvae at 8.6 nmol/g. A low intracranial injection dose into mice causes lacrimation, closure of the eyes and sweating. A high injection dose causes extensive lacrimation and death. The polypeptide is Beta-hexatoxin-Mr1a (Macrothele raveni (Funnel-web spider)).